Consider the following 341-residue polypeptide: tRNA N6-adenosine threonylcarbamoyltransferase (341 aa).

Fe cation-binding residues include His-111 and His-115. Substrate contacts are provided by residues 134 to 138, Asp-167, Gly-180, and Asn-277; that span reads LVSGG. Residue Asp-305 participates in Fe cation binding.

Belongs to the KAE1 / TsaD family. Fe(2+) serves as cofactor.

The protein localises to the cytoplasm. The catalysed reaction is L-threonylcarbamoyladenylate + adenosine(37) in tRNA = N(6)-L-threonylcarbamoyladenosine(37) in tRNA + AMP + H(+). Its function is as follows. Required for the formation of a threonylcarbamoyl group on adenosine at position 37 (t(6)A37) in tRNAs that read codons beginning with adenine. Is involved in the transfer of the threonylcarbamoyl moiety of threonylcarbamoyl-AMP (TC-AMP) to the N6 group of A37, together with TsaE and TsaB. TsaD likely plays a direct catalytic role in this reaction. This Chromobacterium violaceum (strain ATCC 12472 / DSM 30191 / JCM 1249 / CCUG 213 / NBRC 12614 / NCIMB 9131 / NCTC 9757 / MK) protein is tRNA N6-adenosine threonylcarbamoyltransferase.